The chain runs to 365 residues: Chorismate synthase (365 aa).

NADP(+) is bound at residue Arg-46. FMN is bound by residues 123 to 125 (RSS), 241 to 242 (NG), Gly-281, 296 to 300 (KPTPS), and Arg-322.

The protein belongs to the chorismate synthase family. In terms of assembly, homotetramer. The cofactor is FMNH2.

The enzyme catalyses 5-O-(1-carboxyvinyl)-3-phosphoshikimate = chorismate + phosphate. It functions in the pathway metabolic intermediate biosynthesis; chorismate biosynthesis; chorismate from D-erythrose 4-phosphate and phosphoenolpyruvate: step 7/7. Functionally, catalyzes the anti-1,4-elimination of the C-3 phosphate and the C-6 proR hydrogen from 5-enolpyruvylshikimate-3-phosphate (EPSP) to yield chorismate, which is the branch point compound that serves as the starting substrate for the three terminal pathways of aromatic amino acid biosynthesis. This reaction introduces a second double bond into the aromatic ring system. In Helicobacter pylori (strain G27), this protein is Chorismate synthase.